A 105-amino-acid polypeptide reads, in one-letter code: Small ribosomal subunit protein bS18 (105 aa).

The interval 1–34 (MMINKEQDLNQLETNQEQSVEQNQTDEKRKPKPN) is disordered. Positions 9-23 (LNQLETNQEQSVEQN) are enriched in polar residues.

It belongs to the bacterial ribosomal protein bS18 family. Part of the 30S ribosomal subunit. Forms a tight heterodimer with protein bS6.

Functionally, binds as a heterodimer with protein bS6 to the central domain of the 16S rRNA, where it helps stabilize the platform of the 30S subunit. This chain is Small ribosomal subunit protein bS18, found in Mycoplasma genitalium (strain ATCC 33530 / DSM 19775 / NCTC 10195 / G37) (Mycoplasmoides genitalium).